A 283-amino-acid chain; its full sequence is Prepilin leader peptidase/N-methyltransferase (283 aa).

Transmembrane regions (helical) follow at residues 13–33 (VWLL…NVVI), 106–126 (WRYP…GLLW), 128–148 (PGLA…LAAI), 153–173 (QLLP…FNLA), 176–196 (FVPL…LWLI), 216–236 (LLAA…VLIA), and 259–279 (LAFG…NVLG).

Belongs to the peptidase A24 family.

Its subcellular location is the cell inner membrane. The enzyme catalyses Typically cleaves a -Gly-|-Phe- bond to release an N-terminal, basic peptide of 5-8 residues from type IV prepilin, and then N-methylates the new N-terminal amino group, the methyl donor being S-adenosyl-L-methionine.. Functionally, plays a role in type II pseudopili formation by proteolytically removing the leader sequence from substrate proteins and subsequently monomethylating the alpha-amino group of the newly exposed N-terminal phenylalanine. Substrates include proteins required for biogenesis of the type II general secretory apparatus. The sequence is that of Prepilin leader peptidase/N-methyltransferase (outO) from Dickeya chrysanthemi (Pectobacterium chrysanthemi).